The primary structure comprises 188 residues: ATP synthase subunit b (188 aa).

The helical transmembrane segment at 21–41 (ILPHLGELIVGIIFAIIIYAV) threads the bilayer.

It belongs to the ATPase B chain family. In terms of assembly, F-type ATPases have 2 components, F(1) - the catalytic core - and F(0) - the membrane proton channel. F(1) has five subunits: alpha(3), beta(3), gamma(1), delta(1), epsilon(1). F(0) has three main subunits: a(1), b(2) and c(10-14). The alpha and beta chains form an alternating ring which encloses part of the gamma chain. F(1) is attached to F(0) by a central stalk formed by the gamma and epsilon chains, while a peripheral stalk is formed by the delta and b chains.

It localises to the cell membrane. In terms of biological role, f(1)F(0) ATP synthase produces ATP from ADP in the presence of a proton or sodium gradient. F-type ATPases consist of two structural domains, F(1) containing the extramembraneous catalytic core and F(0) containing the membrane proton channel, linked together by a central stalk and a peripheral stalk. During catalysis, ATP synthesis in the catalytic domain of F(1) is coupled via a rotary mechanism of the central stalk subunits to proton translocation. Functionally, component of the F(0) channel, it forms part of the peripheral stalk, linking F(1) to F(0). The sequence is that of ATP synthase subunit b from Kineococcus radiotolerans (strain ATCC BAA-149 / DSM 14245 / SRS30216).